Here is a 64-residue protein sequence, read N- to C-terminus: Large ribosomal subunit protein bL33c (64 aa).

Belongs to the bacterial ribosomal protein bL33 family.

The protein localises to the plastid. The protein resides in the chloroplast. This Huperzia lucidula (Shining clubmoss) protein is Large ribosomal subunit protein bL33c.